The chain runs to 124 residues: Apolipoprotein C-IV (124 aa).

Residues 1-27 (MSLLRCRQQTLPSLCLSVLFLACFVAS) form the signal peptide.

Belongs to the apolipoprotein C4 family.

It is found in the secreted. Functionally, may participate in lipoprotein metabolism. This chain is Apolipoprotein C-IV (Apoc4), found in Rattus norvegicus (Rat).